The primary structure comprises 380 residues: Chaperone protein DnaJ (380 aa).

The J domain occupies 4 to 69; the sequence is DYYEILGVTR…QKRAAYDRFG (66 aa). The CR-type zinc finger occupies 135–213; sequence GKTAQINIPS…CQGTRRVEKN (79 aa). The Zn(2+) site is built by C148, C151, C165, C168, C187, C190, C201, and C204. 4 CXXCXGXG motif repeats span residues 148 to 155, 165 to 172, 187 to 194, and 201 to 208; these read CDSCEGSG, CGTCHGAG, CHACNGRG, and CPKCQGTR.

The protein belongs to the DnaJ family. In terms of assembly, homodimer. Requires Zn(2+) as cofactor.

The protein localises to the cytoplasm. Its function is as follows. Participates actively in the response to hyperosmotic and heat shock by preventing the aggregation of stress-denatured proteins and by disaggregating proteins, also in an autonomous, DnaK-independent fashion. Unfolded proteins bind initially to DnaJ; upon interaction with the DnaJ-bound protein, DnaK hydrolyzes its bound ATP, resulting in the formation of a stable complex. GrpE releases ADP from DnaK; ATP binding to DnaK triggers the release of the substrate protein, thus completing the reaction cycle. Several rounds of ATP-dependent interactions between DnaJ, DnaK and GrpE are required for fully efficient folding. Also involved, together with DnaK and GrpE, in the DNA replication of plasmids through activation of initiation proteins. The chain is Chaperone protein DnaJ from Bartonella quintana (strain Toulouse) (Rochalimaea quintana).